We begin with the raw amino-acid sequence, 371 residues long: Cyanide hydratase (371 aa).

The region spanning 6–285 (YKAAAVTSEP…DGLLYVDIDL (280 aa)) is the CN hydrolase domain. Glu-46 (proton acceptor) is an active-site residue. Residue Lys-128 is part of the active site. Catalysis depends on Cys-163, which acts as the Nucleophile. Over residues 339–353 (GLNRPLDPPKDERHG) the composition is skewed to basic and acidic residues. The disordered stretch occupies residues 339 to 371 (GLNRPLDPPKDERHGIVGVAGQKSAEQRKAGDL).

It belongs to the carbon-nitrogen hydrolase superfamily. Nitrilase family. As to quaternary structure, oligomer of dimers, forming left-handed helical fibers.

It catalyses the reaction formamide = hydrogen cyanide + H2O. Its function is as follows. Catalyzes the hydration of cyanide to formamide. Degradation of cyanide may be important for plant pathogenic fungi in infection of cyanogenic plants. Also acts on 2-cyanopyridine, fumaronitrile and benzonitrile, albeit at a lower rate. This Stereum hirsutum (strain FP-91666) (White-rot fungus) protein is Cyanide hydratase (nit).